The primary structure comprises 442 residues: 5-methylthioadenosine/S-adenosylhomocysteine deaminase (442 aa).

Residues H72 and H74 each coordinate Zn(2+). Substrate is bound by residues E101 and H194. Residue H221 participates in Zn(2+) binding. Substrate is bound by residues E224 and D309. Position 309 (D309) interacts with Zn(2+).

The protein belongs to the metallo-dependent hydrolases superfamily. MTA/SAH deaminase family. Zn(2+) is required as a cofactor.

It carries out the reaction S-adenosyl-L-homocysteine + H2O + H(+) = S-inosyl-L-homocysteine + NH4(+). The enzyme catalyses S-methyl-5'-thioadenosine + H2O + H(+) = S-methyl-5'-thioinosine + NH4(+). Catalyzes the deamination of 5-methylthioadenosine and S-adenosyl-L-homocysteine into 5-methylthioinosine and S-inosyl-L-homocysteine, respectively. Is also able to deaminate adenosine. The polypeptide is 5-methylthioadenosine/S-adenosylhomocysteine deaminase (Teredinibacter turnerae (strain ATCC 39867 / T7901)).